The chain runs to 634 residues: 1-phosphatidylinositol 4,5-bisphosphate phosphodiesterase zeta-1 (634 aa).

Positions 35-70 (CNTIHVKYIFKDNDRLKQGRITIEEFRTIYRIITYR) constitute an EF-hand domain. The PI-PLC X-box domain maps to 155–299 (QDMTHPLTDY…LKFKILVRNK (145 aa)). Catalysis depends on residues histidine 170 and histidine 215. Residues 312–345 (GSDMHGKVEEFEEEEEIEQEEDGSGAKEPEPVGD) are disordered. Residues 321–334 (EFEEEEEIEQEEDG) show a composition bias toward acidic residues. A PI-PLC Y-box domain is found at 376–492 (LSDLVIYTKV…GYVLKPRFLR (117 aa)). The C2 domain occupies 492–615 (RDKKTKFNPH…RGYRRVPLFS (124 aa)).

In terms of assembly, interacts (via its C2 domain) with PtdIns(3)P and, to a lesser extent, PtdIns(5)P in vitro. It depends on Ca(2+) as a cofactor.

Its subcellular location is the nucleus. The protein resides in the cytoplasm. It is found in the perinuclear region. It catalyses the reaction a 1,2-diacyl-sn-glycero-3-phospho-(1D-myo-inositol-4,5-bisphosphate) + H2O = 1D-myo-inositol 1,4,5-trisphosphate + a 1,2-diacyl-sn-glycerol + H(+). Its function is as follows. The production of the second messenger molecules diacylglycerol (DAG) and inositol 1,4,5-trisphosphate (IP3) is mediated by activated phosphatidylinositol-specific phospholipase C enzymes. In vitro, hydrolyzes PtdIns(4,5)P2 in a Ca(2+)-dependent manner. Triggers intracellular Ca(2+) oscillations in oocytes solely during M phase and is involved in inducing oocyte activation and initiating embryonic development up to the blastocyst stage. Is therefore a strong candidate for the egg-activating soluble sperm factor that is transferred from the sperm into the egg cytoplasm following gamete membrane fusion. May exert an inhibitory effect on phospholipase-C-coupled processes that depend on calcium ions and protein kinase C, including CFTR trafficking and function. This Bos taurus (Bovine) protein is 1-phosphatidylinositol 4,5-bisphosphate phosphodiesterase zeta-1.